A 384-amino-acid chain; its full sequence is DNA repair protein RAD51 homolog 2 (384 aa).

An interaction with RAD51C region spans residues 1–75 (MGSKKLKRVG…TAYGIKAQRS (75 aa)). 108-115 (GPPGCGKT) provides a ligand contact to ATP.

The protein belongs to the RecA family. RAD51 subfamily. As to quaternary structure, part of the BCDX2 complex consisting of RAD51B, RAD51C, RAD51D and XRCC2; the complex has a ring-like structure arranged into a flat disc around a central channel. The BCDX2 subcomplex RAD51B:RAD51C interacts with RAD51. Interacts with SWSAP1; involved in homologous recombination repair. Interacts with HELQ. Phosphorylated on tyrosine residues by BCR-ABL. As to expression, expressed in a wide range of tissues.

The protein resides in the nucleus. Functionally, involved in the homologous recombination repair (HRR) pathway of double-stranded DNA breaks arising during DNA replication or induced by DNA-damaging agents. May promote the assembly of presynaptic RAD51 nucleoprotein filaments. Binds single-stranded DNA and double-stranded DNA and has DNA-dependent ATPase activity. Part of the RAD51 paralog protein complex BCDX2 which acts in the BRCA1-BRCA2-dependent HR pathway. Upon DNA damage, BCDX2 acts downstream of BRCA2 recruitment and upstream of RAD51 recruitment. BCDX2 binds predominantly to the intersection of the four duplex arms of the Holliday junction and to junction of replication forks. The BCDX2 complex was originally reported to bind single-stranded DNA, single-stranded gaps in duplex DNA and specifically to nicks in duplex DNA. The BCDX2 subcomplex RAD51B:RAD51C exhibits single-stranded DNA-dependent ATPase activity suggesting an involvement in early stages of the HR pathway. This is DNA repair protein RAD51 homolog 2 (RAD51B) from Homo sapiens (Human).